Here is a 121-residue protein sequence, read N- to C-terminus: Glycine cleavage system H protein (121 aa).

One can recognise a Lipoyl-binding domain in the interval 16–98; the sequence is VATIGITAHA…EAGGWFAKVR (83 aa). At Lys-57 the chain carries N6-lipoyllysine.

Belongs to the GcvH family. The glycine cleavage system is composed of four proteins: P, T, L and H. It depends on (R)-lipoate as a cofactor.

The glycine cleavage system catalyzes the degradation of glycine. The H protein shuttles the methylamine group of glycine from the P protein to the T protein. The polypeptide is Glycine cleavage system H protein (Phenylobacterium zucineum (strain HLK1)).